A 478-amino-acid polypeptide reads, in one-letter code: Poly(A) RNA polymerase cid11 (478 aa).

Mg(2+) is bound by residues Asp106 and Asp108. Positions 263-317 (SLGRLLIDFFYYYGFSFNYLDSVVSVRSGTVLNKQEKGWAMEVNNSLCVEEPFNT) constitute a PAP-associated domain. The segment at 428 to 447 (QSYENKANRDSDFQGQTSLT) is disordered.

It belongs to the DNA polymerase type-B-like family. The cofactor is Mg(2+). It depends on Mn(2+) as a cofactor.

Its subcellular location is the cytoplasm. It is found in the nucleus. The enzyme catalyses RNA(n) + ATP = RNA(n)-3'-adenine ribonucleotide + diphosphate. The chain is Poly(A) RNA polymerase cid11 (cid11) from Schizosaccharomyces pombe (strain 972 / ATCC 24843) (Fission yeast).